A 328-amino-acid chain; its full sequence is Serine protease 27 (328 aa).

The first 22 residues, 1–22 (MRQPHITALLLLPLLLRSGTEG), serve as a signal peptide directing secretion. Residues 23 to 37 (AEAMRACGHPRMFNR) constitute a propeptide, activation peptide. In terms of domain architecture, Peptidase S1 spans 38–280 (MVGGEDALEG…HYQWIHQIIP (243 aa)). An intrachain disulfide couples cysteine 63 to cysteine 79. Histidine 78 serves as the catalytic Charge relay system. Asparagine 82 carries N-linked (GlcNAc...) asparagine glycosylation. The Charge relay system role is filled by aspartate 127. Cystine bridges form between cysteine 161–cysteine 238, cysteine 194–cysteine 217, and cysteine 228–cysteine 256. The Charge relay system role is filled by serine 232.

It belongs to the peptidase S1 family.

The protein resides in the secreted. This is Serine protease 27 (Prss27) from Rattus norvegicus (Rat).